A 183-amino-acid chain; its full sequence is Putative 3-methyladenine DNA glycosylase (183 aa).

Belongs to the DNA glycosylase MPG family.

The polypeptide is Putative 3-methyladenine DNA glycosylase (Legionella pneumophila (strain Lens)).